Reading from the N-terminus, the 204-residue chain is ATP phosphoribosyltransferase (204 aa).

It belongs to the ATP phosphoribosyltransferase family. Short subfamily. In terms of assembly, heteromultimer composed of HisG and HisZ subunits.

It localises to the cytoplasm. The enzyme catalyses 1-(5-phospho-beta-D-ribosyl)-ATP + diphosphate = 5-phospho-alpha-D-ribose 1-diphosphate + ATP. Its pathway is amino-acid biosynthesis; L-histidine biosynthesis; L-histidine from 5-phospho-alpha-D-ribose 1-diphosphate: step 1/9. Functionally, catalyzes the condensation of ATP and 5-phosphoribose 1-diphosphate to form N'-(5'-phosphoribosyl)-ATP (PR-ATP). Has a crucial role in the pathway because the rate of histidine biosynthesis seems to be controlled primarily by regulation of HisG enzymatic activity. This Staphylococcus aureus (strain MRSA252) protein is ATP phosphoribosyltransferase.